Here is a 278-residue protein sequence, read N- to C-terminus: 4-deoxy-L-threo-5-hexosulose-uronate ketol-isomerase (278 aa).

Positions 196, 198, 203, and 245 each coordinate Zn(2+).

The protein belongs to the KduI family. It depends on Zn(2+) as a cofactor.

The enzyme catalyses 5-dehydro-4-deoxy-D-glucuronate = 3-deoxy-D-glycero-2,5-hexodiulosonate. It functions in the pathway glycan metabolism; pectin degradation; 2-dehydro-3-deoxy-D-gluconate from pectin: step 4/5. Functionally, catalyzes the isomerization of 5-dehydro-4-deoxy-D-glucuronate to 3-deoxy-D-glycero-2,5-hexodiulosonate. This Shigella sonnei (strain Ss046) protein is 4-deoxy-L-threo-5-hexosulose-uronate ketol-isomerase.